We begin with the raw amino-acid sequence, 286 residues long: Zinc finger protein ZAT5 (286 aa).

Disordered stretches follow at residues 1-28, 40-60, and 131-171; these read MMMG…RSSS, STSS…EYNS, and GGHR…FKVS. A C2H2-type 1 zinc finger spans residues 115–137; it reads YECKTCNRTFSSFQALGGHRASH. Positions 154 to 171 are enriched in polar residues; sequence QPKSSASEEGQNSHFKVS. The C2H2-type 2 zinc finger occupies 190–212; the sequence is HECSICGSEFTSGQALGGHMRRH.

In terms of tissue distribution, expressed in flowers and siliques.

The protein localises to the nucleus. Probable transcription factor that may be involved in stress responses. This chain is Zinc finger protein ZAT5 (ZAT5), found in Arabidopsis thaliana (Mouse-ear cress).